Here is a 96-residue protein sequence, read N- to C-terminus: Plasminogen-like protein B (96 aa).

Positions 1–19 (MEHKEVVLLLLLFLKSGQG) are cleaved as a signal peptide. In terms of domain architecture, PAN spans 20–96 (EPLDDYVNTQ…RMRDAVLFEK (77 aa)). Intrachain disulfides connect cysteine 49–cysteine 73 and cysteine 53–cysteine 61.

The protein resides in the secreted. May bind noncovalently to lysine binding sites present in the kringle structures of plasminogen. This may interfere with the binding of fibrin or alpha-2-antiplasmin to plasminogen and may result in the localization of activity at sites necessary for extracellular matrix destruction. This chain is Plasminogen-like protein B (PLGLB1), found in Homo sapiens (Human).